A 150-amino-acid chain; its full sequence is Large ribosomal subunit protein bL9 (150 aa).

This sequence belongs to the bacterial ribosomal protein bL9 family.

Functionally, binds to the 23S rRNA. In Wigglesworthia glossinidia brevipalpis, this protein is Large ribosomal subunit protein bL9.